The chain runs to 334 residues: D-fructose 1,6-bisphosphatase class 2/sedoheptulose 1,7-bisphosphatase (334 aa).

Residues aspartate 33, glutamate 57, aspartate 85, and glutamate 88 each contribute to the Mn(2+) site. Substrate-binding positions include glutamate 88 to threonine 90, tyrosine 119, arginine 164 to arginine 166, and aspartate 186 to aspartate 188. A Mn(2+)-binding site is contributed by glutamate 213.

Belongs to the FBPase class 2 family. As to quaternary structure, homotetramer. Mn(2+) is required as a cofactor.

It catalyses the reaction beta-D-fructose 1,6-bisphosphate + H2O = beta-D-fructose 6-phosphate + phosphate. The catalysed reaction is D-sedoheptulose 1,7-bisphosphate + H2O = D-sedoheptulose 7-phosphate + phosphate. It participates in carbohydrate biosynthesis; Calvin cycle. Its function is as follows. Catalyzes the hydrolysis of fructose 1,6-bisphosphate (Fru 1,6-P2) and sedoheptulose 1,7-bisphosphate (Sed 1,7-P2) to fructose 6-phosphate and sedoheptulose 7-phosphate, respectively. This chain is D-fructose 1,6-bisphosphatase class 2/sedoheptulose 1,7-bisphosphatase, found in Prochlorococcus marinus (strain MIT 9303).